The chain runs to 202 residues: dITP/XTP pyrophosphatase (202 aa).

Substrate is bound at residue 7–12 (SNNPGK). Residues glutamate 39 and aspartate 68 each coordinate Mg(2+). Residue aspartate 68 is the Proton acceptor of the active site. Substrate contacts are provided by residues alanine 69, 157–160 (FGFD), lysine 180, and 185–186 (HR).

This sequence belongs to the HAM1 NTPase family. In terms of assembly, homodimer. Mg(2+) serves as cofactor.

It carries out the reaction XTP + H2O = XMP + diphosphate + H(+). It catalyses the reaction dITP + H2O = dIMP + diphosphate + H(+). The catalysed reaction is ITP + H2O = IMP + diphosphate + H(+). In terms of biological role, pyrophosphatase that catalyzes the hydrolysis of nucleoside triphosphates to their monophosphate derivatives, with a high preference for the non-canonical purine nucleotides XTP (xanthosine triphosphate), dITP (deoxyinosine triphosphate) and ITP. Seems to function as a house-cleaning enzyme that removes non-canonical purine nucleotides from the nucleotide pool, thus preventing their incorporation into DNA/RNA and avoiding chromosomal lesions. In Polaromonas naphthalenivorans (strain CJ2), this protein is dITP/XTP pyrophosphatase.